The primary structure comprises 310 residues: Apolipoprotein E (310 aa).

The first 18 residues, 1–18 (MKVLWAALVVTLLAGCGA), serve as a signal peptide directing secretion. A run of 8 repeats spans residues 77–98 (ALMD…EQLG), 99–120 (PVTE…ARLG), 121–142 (ADME…AMVG), 143–164 (QSTE…KRLL), 165–186 (RDAE…EGAE), 187–208 (RSVN…TVHT), 209–226 (LVSK…QRLR), and 227–248 (GRLE…EQVQ). The segment at 77-248 (ALMDDTMKEV…RLDEVREQVQ (172 aa)) is 8 X 22 AA approximate tandem repeats. The LDL and other lipoprotein receptors binding stretch occupies residues 155 to 165 (HLRKMRKRLLR). Residue 159–162 (MRKR) coordinates heparin. Residues 207–283 (HTLVSKPLQE…SWFEPLVQDM (77 aa)) form a lipid-binding and lipoprotein association region. A heparin-binding site is contributed by 222-229 (AQRLRGRL). The segment at 259-310 (NQVRLQAEAFQGRLKSWFEPLVQDMQQKWAELVEKVQLAVGAVPTSVPSEKQ) is homooligomerization. The specificity for association with VLDL stretch occupies residues 271-283 (RLKSWFEPLVQDM).

The protein belongs to the apolipoprotein A1/A4/E family. As to quaternary structure, homotetramer. May interact with ABCA1; functionally associated with ABCA1 in the biogenesis of HDLs. May interact with APP/A4 amyloid-beta peptide; the interaction is extremely stable in vitro but its physiological significance is unclear. May interact with MAPT. May interact with MAP2. In the cerebrospinal fluid, interacts with secreted SORL1. Interacts with PMEL; this allows the loading of PMEL luminal fragment on ILVs to induce fibril nucleation. In terms of processing, APOE exists as multiple glycosylated and sialylated glycoforms within cells and in plasma. The extent of glycosylation and sialylation are tissue and context specific. Glycated in plasma VLDL. Post-translationally, phosphorylated by FAM20C in the extracellular medium.

Its subcellular location is the secreted. It localises to the extracellular space. It is found in the extracellular matrix. The protein localises to the extracellular vesicle. The protein resides in the endosome. Its subcellular location is the multivesicular body. Its function is as follows. APOE is an apolipoprotein, a protein associating with lipid particles, that mainly functions in lipoprotein-mediated lipid transport between organs via the plasma and interstitial fluids. APOE is a core component of plasma lipoproteins and is involved in their production, conversion and clearance. Apolipoproteins are amphipathic molecules that interact both with lipids of the lipoprotein particle core and the aqueous environment of the plasma. As such, APOE associates with chylomicrons, chylomicron remnants, very low density lipoproteins (VLDL) and intermediate density lipoproteins (IDL) but shows a preferential binding to high-density lipoproteins (HDL). It also binds a wide range of cellular receptors including the LDL receptor/LDLR and the very low-density lipoprotein receptor/VLDLR that mediate the cellular uptake of the APOE-containing lipoprotein particles. Finally, APOE also has a heparin-binding activity and binds heparan-sulfate proteoglycans on the surface of cells, a property that supports the capture and the receptor-mediated uptake of APOE-containing lipoproteins by cells. The sequence is that of Apolipoprotein E (APOE) from Ceratotherium simum cottoni (Northern white rhinoceros).